The following is a 185-amino-acid chain: Elongation factor P (185 aa).

Belongs to the elongation factor P family.

Its subcellular location is the cytoplasm. It participates in protein biosynthesis; polypeptide chain elongation. Its function is as follows. Involved in peptide bond synthesis. Stimulates efficient translation and peptide-bond synthesis on native or reconstituted 70S ribosomes in vitro. Probably functions indirectly by altering the affinity of the ribosome for aminoacyl-tRNA, thus increasing their reactivity as acceptors for peptidyl transferase. The chain is Elongation factor P from Metamycoplasma arthritidis (strain 158L3-1) (Mycoplasma arthritidis).